The chain runs to 533 residues: MSWAARPPFLPQRHAAGQCGPVGVRKEMHCGVASRWRRRRPWLDPAAAAAAAAAAGEQQTPEPEPGEAGRDGMGDSGRDSRSPDSSSPNPLSQGAPPPSPPGLPLPPSSAPTLGGSGAPPPPPMPPPQLGSPFPVISSSMGSPGLPPPAPPGFSGPVSSPQINSTVSLPGGGSGPPEDVKPPVLGVRGLHCPPPPGGPGAGKRLCAICGDRSSGKHYGVYSCEGCKGFFKRTIRKDLTYSCRDNKDCTVDKRQRNRCQYCRYQKCLATGMKREAVQEERQRGKDKDGDGEGAGGAPEEMPVDRILEAELAVEQKSDQGVEGPGGTGGSGSSPNDPVTNICQAADKQLFTLVEWAKRIPHFSSLPLDDQVILLRAGWNELLIASFSHRSIDVRDGILLATGLHVHRNSAHSAGVGAIFDRVLTELVSKMRDMRMDKTELGCLRAIILFNPDAKGLSNPSEVEVLREKVYASLETYCKQKYPEQQGRFAKLLLRLPALRSIGLKCLEHLFFFKLIGDTPIDTFLMEMLEAPHQLA.

Residues 1 to 24 (MSWAARPPFLPQRHAAGQCGPVGV) are disordered. The segment at 1-204 (MSWAARPPFL…PGGPGAGKRL (204 aa)) is modulating. The residue at position 25 (R25) is an Omega-N-methylarginine. The segment at 37–183 (RRRRPWLDPA…GPPEDVKPPV (147 aa)) is disordered. The span at 46-61 (AAAAAAAAAAGEQQTP) shows a compositional bias: low complexity. Residues 67 to 82 (EAGRDGMGDSGRDSRS) show a composition bias toward basic and acidic residues. Residues 83 to 94 (PDSSSPNPLSQG) are compositionally biased toward low complexity. 2 stretches are compositionally biased toward pro residues: residues 95-109 (APPPSPPGLPLPPSS) and 118-129 (APPPPPMPPPQL). Low complexity predominate over residues 130–143 (GSPFPVISSSMGSP). Residues 144 to 153 (GLPPPAPPGF) show a composition bias toward pro residues. NR C4-type zinc fingers lie at residues 205–225 (CAICGDRSSGKHYGVYSCEGC) and 241–265 (CRDNKDCTVDKRQRNRCQYCRYQKC). Residues 205–270 (CAICGDRSSG…RYQKCLATGM (66 aa)) constitute a DNA-binding region (nuclear receptor). The segment at 271–295 (KREAVQEERQRGKDKDGDGEGAGGA) is hinge. A compositionally biased stretch (basic and acidic residues) spans 276 to 288 (QEERQRGKDKDGD). Disordered regions lie at residues 276–299 (QEERQRGKDKDGDGEGAGGAPEEM) and 313–336 (QKSDQGVEGPGGTGGSGSSPNDPV). The 234-residue stretch at 296-529 (PEEMPVDRIL…TFLMEMLEAP (234 aa)) folds into the NR LBD domain. Gly residues predominate over residues 320–329 (EGPGGTGGSG).

The protein belongs to the nuclear hormone receptor family. NR2 subfamily. In terms of assembly, homodimer (in vitro). Heterodimer with other retinoic acid receptor family members. Binds DNA preferentially as a RAR/RXR heterodimer. Interacts with NR1H3. Interacts with AKAP13.

Its subcellular location is the nucleus. It is found in the cytoplasm. In terms of biological role, receptor for retinoic acid. Retinoic acid receptors bind as heterodimers to their target response elements in response to their ligands, all-trans or 9-cis retinoic acid, and regulate gene expression in various biological processes. The RAR/RXR heterodimers bind to the retinoic acid response elements (RARE). This is Retinoic acid receptor RXR-beta (RXRB) from Canis lupus familiaris (Dog).